The chain runs to 846 residues: Pseudolaratriene synthase, chloroplastic (846 aa).

The N-terminal 58 residues, 1–58, are a transit peptide targeting the chloroplast; sequence MSRFTSATHGLNLSIKMPISVSQVPSIRSNTSKYELQKLRSTGRSVLQTRRQLAIINM. Residues Asp595, Asp599, and Asp747 each contribute to the Mg(2+) site. The short motif at 595-599 is the DDXXD motif element; that stretch reads DDIYD.

Belongs to the terpene synthase family. Mg(2+) is required as a cofactor. As to expression, expressed in young and mature roots. Expressed at low levels in barks.

The protein resides in the plastid. Its subcellular location is the chloroplast. The enzyme catalyses (2E,6E,10E)-geranylgeranyl diphosphate = pseudolaratriene + diphosphate. Its pathway is terpene metabolism. Converts geranylgeranyl diphosphate to an new 5,7-fused bicyclic diterpene, named pseudolaratriene. Catalyzes the first committed step in pseudolaric acid B (PAB) biosynthesis. PAB exhibits antiproliferative activity by inhibiting microtubule polymerization, and has demonstrated antitumor properties against several cancer types. This is Pseudolaratriene synthase, chloroplastic from Pseudolarix amabilis (Golden larch).